Reading from the N-terminus, the 447-residue chain is uncharacterized protein (447 aa).

Disordered regions lie at residues 1-80 (MTFE…EQSS), 115-184 (ATTQ…PNNP), and 295-322 (LQDN…SSGI). Basic and acidic residues predominate over residues 11-32 (QRRDESAYRLGEEDGRQKGESS). The segment covering 42–51 (KNPSNVSFWS) has biased composition (polar residues). Over residues 61 to 72 (VKTDRPQFHRAD) the composition is skewed to basic and acidic residues. The span at 115–158 (ATTQSSPISTSFNPQLPSNSNTNRFDFGSESQLSSNYTNDTGLS) shows a compositional bias: polar residues. Low complexity predominate over residues 300 to 321 (SLTSQGSNLSSQNSGLSSSSSG). The next 2 helical transmembrane spans lie at 385-405 (FMFL…ASFL) and 424-444 (IINR…IGLG).

Its subcellular location is the membrane. This is an uncharacterized protein from Schizosaccharomyces pombe (strain 972 / ATCC 24843) (Fission yeast).